Consider the following 145-residue polypeptide: MKLTNYVQEVSLADFGKPFHHKAYWNKRLKTTGGRFFPKDGHLDFNPRMLEENGELIFRKIVRHELCHYHLYFEGRGYHHKDRDFKDLLAQVNGLRYVPTSSKSKTNHHYSCQTCGQVYQRKRRINLSKYVCGNCHGKLIEKNQS.

Residues 4–140 (TNYVQEVSLA…VCGNCHGKLI (137 aa)) form the SprT-like domain. H64 serves as a coordination point for Zn(2+). E65 is an active-site residue. H68 is a binding site for Zn(2+).

The protein belongs to the SprT family. The cofactor is Zn(2+).

It localises to the cytoplasm. This chain is Protein SprT-like, found in Streptococcus pyogenes serotype M18 (strain MGAS8232).